The primary structure comprises 339 residues: Trace amine-associated receptor 2 (339 aa).

Residues Met1–Ser36 are Extracellular-facing. Asn18 is a glycosylation site (N-linked (GlcNAc...) asparagine). 2 cysteine pairs are disulfide-bonded: Cys21-Cys185 and Cys104-Cys189. A helical transmembrane segment spans residues Leu37 to Ser57. At Tyr58–Asn67 the chain is on the cytoplasmic side. Residues Leu68–Ser88 traverse the membrane as a helical segment. Topologically, residues Met89–Ile106 are extracellular. A helical membrane pass occupies residues His107–Ile127. Residues Asp128–Arg150 lie on the Cytoplasmic side of the membrane. A helical transmembrane segment spans residues Leu151–Ala171. Over Tyr172–Lys195 the chain is Extracellular. Residues Leu196 to Ile216 form a helical membrane-spanning segment. Residues Tyr217–Thr251 are Cytoplasmic-facing. Residues Leu252–Leu272 form a helical membrane-spanning segment. The Extracellular segment spans residues Asp273–Ala287. Asn277 carries N-linked (GlcNAc...) asparagine glycosylation. A helical transmembrane segment spans residues Leu288 to Phe310. Residues Arg311–Glu339 lie on the Cytoplasmic side of the membrane.

The protein belongs to the G-protein coupled receptor 1 family.

Its subcellular location is the cell membrane. Its function is as follows. Orphan olfactory receptor specific for trace amines. Trace amine compounds are enriched in animal body fluids and act on trace amine-associated receptors (TAARs) to elicit both intraspecific and interspecific innate behaviors. Ligand-binding causes a conformation change that triggers signaling via the G(s)-class of G-proteins which activate adenylate cyclase. May also be required to provide olfactory input into limbic brain areas to regulate emotional behaviors likely via modulation of the dopamine system. The sequence is that of Trace amine-associated receptor 2 (Taar2) from Rattus norvegicus (Rat).